We begin with the raw amino-acid sequence, 215 residues long: Putative serine/threonine-protein kinase YrzF (215 aa).

The region spanning 27 to 215 is the Protein kinase domain; it reads SEELTLIGKG…HFAQRKRKYS (189 aa). Residues 33 to 41 and Lys54 each bind ATP; that span reads IGKGRSAYV. Asp135 serves as the catalytic Proton acceptor.

Belongs to the protein kinase superfamily. Ser/Thr protein kinase family.

It catalyses the reaction L-seryl-[protein] + ATP = O-phospho-L-seryl-[protein] + ADP + H(+). It carries out the reaction L-threonyl-[protein] + ATP = O-phospho-L-threonyl-[protein] + ADP + H(+). The protein is Putative serine/threonine-protein kinase YrzF (yrzF) of Bacillus subtilis (strain 168).